A 2462-amino-acid polypeptide reads, in one-letter code: Piezo-type mechanosensitive ion channel homolog (2462 aa).

19 helical membrane-spanning segments follow: residues 5-25, 27-47, 57-77, 105-125, 163-183, 207-227, 248-268, 325-345, 347-367, 374-394, 404-424, 467-487, 502-522, 554-574, 653-673, 694-714, 730-750, 792-812, and 826-846; these read LVGF…WSVI, FLDL…GYRF, IFIF…IWAA, TVMY…ADIY, AVQL…FFIG, LYIY…PINF, EGPD…LSYV, FFTY…FHFA, LCAF…PSLF, GLLL…NVAF, FGLG…FLYL, LIFL…IFFL, SLIL…IDLV, IALL…LFSF, VYLV…LLWI, AVLV…QLWL, APLL…QLYS, FYAS…GLVI, and SFLI…LWGM. The segment at 927–947 is disordered; the sequence is ASVSSSNGENPSSTDHASISM. Residues 928–939 show a composition bias toward low complexity; that stretch reads SVSSSNGENPSS. 8 helical membrane passes run 1027 to 1047, 1050 to 1070, 1078 to 1098, 1143 to 1160, 1204 to 1224, 1228 to 1248, 1260 to 1280, and 1310 to 1330; these read FWIE…ALLL, FALL…CVLL, LWPV…VATW, TLIS…KLRA, LYCY…TGTL, ILHL…LEIL, VYNF…VGNF, and SALV…MFSS. Residues 1347-1400 adopt a coiled-coil conformation; it reads AIVREQEKKAARKTEQLQQIREAEEKKRQRNLQVEKMKSEMLNLRVQLHRMNSD. The interval 1543 to 1583 is disordered; sequence SDTNEQSSVDDEVYDEMESQKRKHTPFERSTSLQSDRSSDG. Over residues 1550–1559 the composition is skewed to acidic residues; that stretch reads SVDDEVYDEM. The segment covering 1570–1583 has biased composition (polar residues); the sequence is ERSTSLQSDRSSDG. A run of 8 helical transmembrane segments spans residues 1611 to 1631, 1647 to 1667, 1916 to 1936, 1956 to 1976, 1984 to 2004, 2012 to 2032, 2130 to 2150, and 2369 to 2389; these read FIIA…AALF, VIML…QIII, YIFG…QSVI, FVII…IYLC, VYYL…AWSI, AGLA…LQAI, GICL…MYSS, and FLGD…FVLA.

The protein belongs to the PIEZO (TC 1.A.75) family.

Its subcellular location is the membrane. Pore-forming subunit of a mechanosensitive non-specific cation channel, that conducts both sodium and potassium ions. The polypeptide is Piezo-type mechanosensitive ion channel homolog (Arabidopsis thaliana (Mouse-ear cress)).